Consider the following 306-residue polypeptide: MKMNKSLIVLCLSAGLLASAPGISLADVNYVPQNTSDAPAIPSAALQQLTWTPVDQSKTQTTQLATGGQQLNVPGISGPVAAYSVPANIGELTLTLTSEVNKQTSVFAPNVLILDQNMTPSAFFPSSYFTYQEPGVMSADRLEGVMRLTPALGQQKLYVLVFTTEKDLQQTTQLLDPAKAYAKGVGNSIPDIPDPVARHTTDGLLKLKVKTNSSSSVLVGPLFGSSAPAPVTVGNTAAPAVAAPAPAPVKKSEPMLNDTESYFNTAIKNAVAKGDVDKALKLLDEAERLGSTSARSTFISSVKGKG.

The segment at residues 1-22 (MKMNKSLIVLCLSAGLLASAPG) is a signal peptide (or 26).

To S.typhimurium MalM.

It is found in the periplasm. Its function is as follows. Not yet known. Might function in the uptake of a still unidentified substrate. This Escherichia coli (strain K12) protein is Maltose operon periplasmic protein (malM).